A 257-amino-acid polypeptide reads, in one-letter code: MSDPHLKEKVVVIAGPTASGKSDLAIKIAQMIDSEIISEDAFQIYRGLDIGTAKPSKDDLAKVKHHFIDIKEVDESYSAYEFARDARIVINQISSKKKIPLIVGGSGFFLQTLLGDRRISDKDNPIVPKKAGIENRLYNALLIGLNTERSQLYDRINQRVERMFEKGIVKEAENLFRQQGNFQSKKAIGYREFAGYFANQYDLSEVETLIKRDSRRYAKRQLTYFKNQFPDMRWFDTKQITENPKLIIDLVKKFNQF.

15 to 22 (GPTASGKS) provides a ligand contact to ATP. 17–22 (TASGKS) contributes to the substrate binding site.

The protein belongs to the IPP transferase family. In terms of assembly, monomer. It depends on Mg(2+) as a cofactor.

It catalyses the reaction adenosine(37) in tRNA + dimethylallyl diphosphate = N(6)-dimethylallyladenosine(37) in tRNA + diphosphate. Catalyzes the transfer of a dimethylallyl group onto the adenine at position 37 in tRNAs that read codons beginning with uridine, leading to the formation of N6-(dimethylallyl)adenosine (i(6)A). The polypeptide is tRNA dimethylallyltransferase (Oenococcus oeni (strain ATCC BAA-331 / PSU-1)).